A 421-amino-acid chain; its full sequence is UDP-N-acetylglucosamine 1-carboxyvinyltransferase (421 aa).

22-23 contributes to the phosphoenolpyruvate binding site; sequence KN. Arg-93 provides a ligand contact to UDP-N-acetyl-alpha-D-glucosamine. Cys-117 (proton donor) is an active-site residue. Position 117 is a 2-(S-cysteinyl)pyruvic acid O-phosphothioketal (Cys-117). UDP-N-acetyl-alpha-D-glucosamine contacts are provided by residues 122–126, Asp-308, and Ile-330; that span reads RPVDL.

Belongs to the EPSP synthase family. MurA subfamily.

It localises to the cytoplasm. It catalyses the reaction phosphoenolpyruvate + UDP-N-acetyl-alpha-D-glucosamine = UDP-N-acetyl-3-O-(1-carboxyvinyl)-alpha-D-glucosamine + phosphate. The protein operates within cell wall biogenesis; peptidoglycan biosynthesis. Functionally, cell wall formation. Adds enolpyruvyl to UDP-N-acetylglucosamine. The polypeptide is UDP-N-acetylglucosamine 1-carboxyvinyltransferase (Pseudomonas entomophila (strain L48)).